The chain runs to 464 residues: Argininosuccinate lyase (464 aa).

The protein belongs to the lyase 1 family. Argininosuccinate lyase subfamily.

It localises to the cytoplasm. It carries out the reaction 2-(N(omega)-L-arginino)succinate = fumarate + L-arginine. It participates in amino-acid biosynthesis; L-arginine biosynthesis; L-arginine from L-ornithine and carbamoyl phosphate: step 3/3. In Pseudomonas fluorescens (strain ATCC BAA-477 / NRRL B-23932 / Pf-5), this protein is Argininosuccinate lyase.